The sequence spans 204 residues: MILGIDEAGRGCLAGSLFVAGVACNDQTALELLKMGLKDSKKLSLKKRFFLEDKIKTHGKVKFFVVKKSANEIDNLGLGACLKLAIQEILENNRSLANEIKIDGNTAFGLNKRYPNIQTIIKGDETIAQIAMASVLAKAFKDREMLELHALFKEYGWDKNCGYGTKQHIEAITKLGATPFHRHSFTLKNCILNPKLLEVEQRLI.

The 197-residue stretch at 1 to 197 (MILGIDEAGR…KNCILNPKLL (197 aa)) folds into the RNase H type-2 domain. 3 residues coordinate a divalent metal cation: Asp6, Glu7, and Asp103.

It belongs to the RNase HII family. The cofactor is Mn(2+). It depends on Mg(2+) as a cofactor.

It localises to the cytoplasm. The enzyme catalyses Endonucleolytic cleavage to 5'-phosphomonoester.. In terms of biological role, endonuclease that specifically degrades the RNA of RNA-DNA hybrids. The polypeptide is Ribonuclease HII (Helicobacter pylori (strain P12)).